The chain runs to 242 residues: ATP-dependent dethiobiotin synthetase BioD (242 aa).

12-17 (SVGKTI) is an ATP binding site. Thr16 contributes to the Mg(2+) binding site. Residue Lys37 is part of the active site. Position 66 (Asp66) interacts with ATP. Mg(2+) is bound by residues Asp66 and Glu124. 184–185 (NR) is an ATP binding site.

This sequence belongs to the dethiobiotin synthetase family. In terms of assembly, homodimer. Mg(2+) is required as a cofactor.

The protein localises to the cytoplasm. The enzyme catalyses (7R,8S)-7,8-diammoniononanoate + CO2 + ATP = (4R,5S)-dethiobiotin + ADP + phosphate + 3 H(+). The protein operates within cofactor biosynthesis; biotin biosynthesis; biotin from 7,8-diaminononanoate: step 1/2. Catalyzes a mechanistically unusual reaction, the ATP-dependent insertion of CO2 between the N7 and N8 nitrogen atoms of 7,8-diaminopelargonic acid (DAPA, also called 7,8-diammoniononanoate) to form a ureido ring. This chain is ATP-dependent dethiobiotin synthetase BioD, found in Mannheimia succiniciproducens (strain KCTC 0769BP / MBEL55E).